A 128-amino-acid polypeptide reads, in one-letter code: Large ribosomal subunit protein uL22 (128 aa).

The disordered stretch occupies residues 1-22 (MARGHRSQIKRERNANKDTRPS). The span at 9–21 (IKRERNANKDTRP) shows a compositional bias: basic and acidic residues.

It belongs to the universal ribosomal protein uL22 family. As to quaternary structure, part of the 50S ribosomal subunit.

This protein binds specifically to 23S rRNA; its binding is stimulated by other ribosomal proteins, e.g. L4, L17, and L20. It is important during the early stages of 50S assembly. It makes multiple contacts with different domains of the 23S rRNA in the assembled 50S subunit and ribosome. Its function is as follows. The globular domain of the protein is located near the polypeptide exit tunnel on the outside of the subunit, while an extended beta-hairpin is found that lines the wall of the exit tunnel in the center of the 70S ribosome. The polypeptide is Large ribosomal subunit protein uL22 (Lachnoclostridium phytofermentans (strain ATCC 700394 / DSM 18823 / ISDg) (Clostridium phytofermentans)).